The following is a 389-amino-acid chain: Aspartyl protease UND (389 aa).

Positions 1-19 are cleaved as a signal peptide; that stretch reads MKTTMNFVFLFFLPLLINA. Residues 58–383 enclose the Peptidase A1 domain; sequence FMAEIHFGSP…DLSAKTAYIN (326 aa). Asp-76 is an active-site residue. Cysteines 86 and 92 form a disulfide. The N-linked (GlcNAc...) asparagine glycan is linked to Asn-238. Residue Asp-268 is part of the active site. An intrachain disulfide couples Cys-304 to Cys-346.

The protein belongs to the peptidase A1 family.

Probable aspartic protease activated by the transcription factor MYB80. May participate in the regulation of the timing of tapetal programmed cell death (PCD) which is critical for pollen development. In Arabidopsis thaliana (Mouse-ear cress), this protein is Aspartyl protease UND.